Here is a 506-residue protein sequence, read N- to C-terminus: Trans-cinnamate 4-monooxygenase (506 aa).

Residues 3–23 (LLLLEKALLGLFAAAVVAIAV) traverse the membrane as a helical segment. (E)-cinnamate contacts are provided by residues 213–218 (RSRLAQ) and A306. C447 provides a ligand contact to heme.

Belongs to the cytochrome P450 family. It depends on heme as a cofactor.

It localises to the membrane. It catalyses the reaction (E)-cinnamate + reduced [NADPH--hemoprotein reductase] + O2 = (E)-4-coumarate + oxidized [NADPH--hemoprotein reductase] + H2O + H(+). Its pathway is phenylpropanoid metabolism; trans-4-coumarate biosynthesis; trans-4-coumarate from trans-cinnamate: step 1/1. Functionally, catalyzes the first oxidative step of the phenylpropanoid pathway in higher plants by transforming trans-cinnamate into p-coumarate. The compounds formed by this pathway are essential components for lignification, pollination, and defense against ultraviolet light, predators and pathogens. The chain is Trans-cinnamate 4-monooxygenase (CYP73A2) from Ruta graveolens (Common rue).